Reading from the N-terminus, the 943-residue chain is Neutral alpha-glucosidase AB (943 aa).

A signal peptide spans 1 to 23 (MRKLVILIILSIVCSLFIGSIES). The tract at residues 186 to 231 (FEPISDKPQPLPPKEKKSEEENKEANQEEDNNNNNNDNNEEQQVST) is disordered. A compositionally biased stretch (basic and acidic residues) spans 198-211 (PKEKKSEEENKEAN). Residue Asp-540 is the Nucleophile of the active site. Glu-543 is a catalytic residue. The active-site Proton donor is Asp-617. N-linked (GlcNAc...) asparagine glycans are attached at residues Asn-878, Asn-887, and Asn-907.

The protein belongs to the glycosyl hydrolase 31 family.

It is found in the endoplasmic reticulum. The protein localises to the golgi apparatus. It carries out the reaction N(4)-(alpha-D-Glc-(1-&gt;3)-alpha-D-Man-(1-&gt;2)-alpha-D-Man-(1-&gt;2)-alpha-D-Man-(1-&gt;3)-[alpha-D-Man-(1-&gt;2)-alpha-D-Man-(1-&gt;3)-[alpha-D-Man-(1-&gt;2)-alpha-D-Man-(1-&gt;6)]-alpha-D-Man-(1-&gt;6)]-beta-D-Man-(1-&gt;4)-beta-D-GlcNAc-(1-&gt;4)-beta-D-GlcNAc)-L-asparaginyl-[protein] + H2O = N(4)-(alpha-D-Man-(1-&gt;2)-alpha-D-Man-(1-&gt;2)-alpha-D-Man-(1-&gt;3)-[alpha-D-Man-(1-&gt;2)-alpha-D-Man-(1-&gt;3)-[alpha-D-Man-(1-&gt;2)-alpha-D-Man-(1-&gt;6)]-alpha-D-Man-(1-&gt;6)]-beta-D-Man-(1-&gt;4)-beta-D-GlcNAc-(1-&gt;4)-beta-D-GlcNAc)-L-asparaginyl-[protein] (N-glucan mannose isomer 9A1,2,3B1,2,3) + beta-D-glucose. It catalyses the reaction N(4)-(alpha-D-Glc-(1-&gt;3)-alpha-D-Glc-(1-&gt;3)-alpha-D-Man-(1-&gt;2)-alpha-D-Man-(1-&gt;2)-alpha-D-Man-(1-&gt;3)-[alpha-D-Man-(1-&gt;2)-alpha-D-Man-(1-&gt;3)-[alpha-D-Man-(1-&gt;2)-alpha-D-Man-(1-&gt;6)]-alpha-D-Man-(1-&gt;6)]-beta-D-Man-(1-&gt;4)-beta-D-GlcNAc-(1-&gt;4)-beta-D-GlcNAc)-L-asparaginyl-[protein] + H2O = N(4)-(alpha-D-Glc-(1-&gt;3)-alpha-D-Man-(1-&gt;2)-alpha-D-Man-(1-&gt;2)-alpha-D-Man-(1-&gt;3)-[alpha-D-Man-(1-&gt;2)-alpha-D-Man-(1-&gt;3)-[alpha-D-Man-(1-&gt;2)-alpha-D-Man-(1-&gt;6)]-alpha-D-Man-(1-&gt;6)]-beta-D-Man-(1-&gt;4)-beta-D-GlcNAc-(1-&gt;4)-beta-D-GlcNAc)-L-asparaginyl-[protein] + beta-D-glucose. The protein operates within glycan metabolism; N-glycan metabolism. Its function is as follows. Cleaves sequentially the 2 innermost alpha-1,3-linked glucose residues from N-linked oligosaccharides on newly synthesized glycoproteins. This Dictyostelium discoideum (Social amoeba) protein is Neutral alpha-glucosidase AB (modA).